The chain runs to 204 residues: Large ribosomal subunit protein uL4 (204 aa).

Positions 49–75 (TKGRSDVSGGGKKPWRQKGRGGARAGS) are disordered.

It belongs to the universal ribosomal protein uL4 family. In terms of assembly, part of the 50S ribosomal subunit.

One of the primary rRNA binding proteins, this protein initially binds near the 5'-end of the 23S rRNA. It is important during the early stages of 50S assembly. It makes multiple contacts with different domains of the 23S rRNA in the assembled 50S subunit and ribosome. Its function is as follows. Forms part of the polypeptide exit tunnel. This chain is Large ribosomal subunit protein uL4, found in Campylobacter jejuni subsp. jejuni serotype O:23/36 (strain 81-176).